We begin with the raw amino-acid sequence, 1165 residues long: Leptin receptor (1165 aa).

The N-terminal stretch at 1–21 (MICQKFCVVLLHWEFIYVITA) is a signal peptide. Over 22–839 (FNLSYPITPW…QDDIEKHQSD (818 aa)) the chain is Extracellular. 6 N-linked (GlcNAc...) asparagine glycosylation sites follow: N23, N41, N56, N73, N81, and N98. 5 cysteine pairs are disulfide-bonded: C37-C90, C89-C99, C131-C142, C186-C196, and C188-C193. The N-linked (GlcNAc...) asparagine glycan is linked to N187. Residues N206, N276, N347, and N397 are each glycosylated (N-linked (GlcNAc...) asparagine). In terms of domain architecture, Fibronectin type-III 1 spans 239–333 (PPLGLHMEIT…TPRVFTTQDV (95 aa)). In terms of domain architecture, Ig-like spans 331 to 429 (QDVIYFPPKI…HRYAELYVID (99 aa)). 5 disulfides stabilise this stretch: C352–C412, C413–C418, C436–C447, C473–C528, and C488–C498. Residues 467–484 (HRSSLYCSDIPSIHPISE) form a leptin-binding region. 7 N-linked (GlcNAc...) asparagine glycosylation sites follow: N516, N624, N659, N688, N697, N728, and N750. Fibronectin type-III domains lie at 539 to 634 (PPSS…TVVM), 639 to 732 (PMRG…LTFS), and 740 to 833 (IVQS…QDDI). A WSXWS motif motif is present at residues 622 to 626 (WSNWS). A helical membrane pass occupies residues 840–862 (AGLYVIVPVIISSSILLLGTLLI). Over 863–1165 (SHQRMKKLFW…MENKMCDLTV (303 aa)) the chain is Cytoplasmic. A Box 1 motif motif is present at residues 871–879 (FWEDVPNPK). S882 carries the post-translational modification Phosphoserine. A required for JAK2 activation region spans residues 893 to 898 (ETFEHL). Residues 898–906 (LFIKHTASV) form a required for STAT3 phosphorylation region. Y986 carries the phosphotyrosine; by JAK2 modification. Y1079 is subject to Phosphotyrosine. Y1141 is modified (phosphotyrosine; by JAK2).

Belongs to the type I cytokine receptor family. Type 2 subfamily. In terms of assembly, present as a mixture of monomers and dimers. The phosphorylated receptor binds a number of SH2 domain-containing proteins such as JAK2, STAT3, PTPN11, and SOCS3. Interaction with SOCS3 inhibits JAK/STAT signaling and MAPK cascade. On ligand binding, phosphorylated on two conserved C-terminal tyrosine residues (isoform B only) by JAK2. Tyr-986 is required for complete binding and activation of PTPN11, ERK/FOS activation,for interaction with SOCS3 and SOCS3 mediated inhibition of leptin signaling. Phosphorylation on Tyr-1141 is required for STAT3 binding/activation. Phosphorylation of Tyr-1079 has a more accessory role. Isoform A is expressed in fetal liver and in hematopoietic tissues and choroid plexus. In adults highest expression in heart, liver, small intestine, prostate and ovary. Low level in lung and kidney. Isoform B is highly expressed in hypothalamus, but also in skeletal muscle. Detected in fundic and antral epithelial cells of the gastric mucosa. Isoform B and isoform A are expressed by NK cells (at protein level).

Its subcellular location is the cell membrane. It localises to the basolateral cell membrane. It is found in the secreted. Its function is as follows. Receptor for hormone LEP/leptin. On ligand binding, mediates LEP central and peripheral effects through the activation of different signaling pathways such as JAK2/STAT3 and MAPK cascade/FOS. In the hypothalamus, LEP acts as an appetite-regulating factor that induces a decrease in food intake and an increase in energy consumption by inducing anorexinogenic factors and suppressing orexigenic neuropeptides, also regulates bone mass and secretion of hypothalamo-pituitary-adrenal hormones. In the periphery, increases basal metabolism, influences reproductive function, regulates pancreatic beta-cell function and insulin secretion, is pro-angiogenic and affects innate and adaptive immunity. Control of energy homeostasis and melanocortin production (stimulation of POMC and full repression of AgRP transcription) is mediated by STAT3 signaling, whereas distinct signals regulate NPY and the control of fertility, growth and glucose homeostasis. Involved in the regulation of counter-regulatory response to hypoglycemia by inhibiting neurons of the parabrachial nucleus. Has a specific effect on T lymphocyte responses, differentially regulating the proliferation of naive and memory T -ells. Leptin increases Th1 and suppresses Th2 cytokine production. In terms of biological role, may transport LEP across the blood-brain barrier. Binds LEP and mediates LEP endocytosis. Does not induce phosphorylation of and activate STAT3. Functionally, antagonizes Isoform A and isoform B-mediated LEP binding and endocytosis. The protein is Leptin receptor (LEPR) of Homo sapiens (Human).